A 145-amino-acid chain; its full sequence is Large ribosomal subunit protein uL14m (145 aa).

A mitochondrion-targeting transit peptide spans 1 to 30 (MAALTGLWGSFAHVSRAFSQRCFSTSGSLS).

It belongs to the universal ribosomal protein uL14 family. As to quaternary structure, component of the mitochondrial ribosome large subunit (39S) which comprises a 16S rRNA and about 50 distinct proteins. Interacts with MALSU1.

Its subcellular location is the mitochondrion. Its function is as follows. May form part of 2 intersubunit bridges in the assembled ribosome. Upon binding to MALSU1, intersubunit bridge formation is blocked, preventing ribosome formation and repressing translation. The chain is Large ribosomal subunit protein uL14m (Mrpl14) from Mus musculus (Mouse).